Reading from the N-terminus, the 149-residue chain is uncharacterized protein (149 aa).

A helical transmembrane segment spans residues 12–31 (FKNLVIGAVSGVAAAYFLST).

The protein localises to the membrane. This is an uncharacterized protein from Streptococcus pyogenes serotype M6 (strain ATCC BAA-946 / MGAS10394).